The primary structure comprises 117 residues: Fluoride-specific ion channel FluC 2 (117 aa).

Helical transmembrane passes span 1–21 and 46–66; these read MISIILVMIGGGLGAIARSAI and FLIGLTIGLSISISWFPAFFV. Na(+) contacts are provided by Gly71 and Thr74. A helical membrane pass occupies residues 95–115; that stretch reads LFLNYSLLQFIIGFIACYIGY.

Belongs to the fluoride channel Fluc/FEX (TC 1.A.43) family.

The protein localises to the cell membrane. It catalyses the reaction fluoride(in) = fluoride(out). With respect to regulation, na(+) is not transported, but it plays an essential structural role and its presence is essential for fluoride channel function. Its function is as follows. Fluoride-specific ion channel. Important for reducing fluoride concentration in the cell, thus reducing its toxicity. The protein is Fluoride-specific ion channel FluC 2 of Staphylococcus aureus (strain MRSA252).